The following is a 280-amino-acid chain: MASNQQSYKAGETRGKTQEKTGQAMGAMRDKAEEGKDKTSQTAQKAQQKAQETAQAAKDKTSQAAQTTQQKAQETAQAAKDKTSQAAQTTQQKAQETAQAAKDKTSQAAQTTQQKAHETTQSSKEKTSQAAQTAQEKARETKDKTGSYLSETGEAVKQKAQDAAQYTKETAQNAAQYTKETAEAGKDKTGGFLSQTGEHVKQMAMGAADAVKHTFGMATEEEDREHYPGTTTCTTQSTDPTRHTYEKEVRITGTIYEPSFFCFNNVMCLCFVISVVSLCL.

Disordered stretches follow at residues 1–156 (MASN…GEAV) and 220–241 (EEED…TDPT). The segment covering 28–39 (MRDKAEEGKDKT) has biased composition (basic and acidic residues). LEA 11-mer repeat repeat units follow at residues 31–41 (KAEEGKDKTSQ), 53–63 (TAQAAKDKTSQ), 75–85 (TAQAAKDKTSQ), 97–107 (TAQAAKDKTSQ), and 119–129 (TTQSSKEKTSQ). Low complexity predominate over residues 40-114 (SQTAQKAQQK…TSQAAQTTQQ (75 aa)). 2 stretches are compositionally biased toward basic and acidic residues: residues 115–127 (KAHE…KEKT) and 136–145 (EKARETKDKT). Low complexity predominate over residues 230 to 239 (TTTCTTQSTD).

Belongs to the LEA type 4 family.

Lea proteins are late embryonic proteins abundant in higher plant seed embryos. This is Late embryogenesis abundant protein 76 from Brassica napus (Rape).